A 428-amino-acid chain; its full sequence is Anaerobic glycerol-3-phosphate dehydrogenase subunit B (428 aa).

It belongs to the anaerobic G-3-P dehydrogenase subunit B family. In terms of assembly, composed of a catalytic GlpA/B dimer and of membrane bound GlpC. Requires FMN as cofactor.

The enzyme catalyses a quinone + sn-glycerol 3-phosphate = dihydroxyacetone phosphate + a quinol. It functions in the pathway polyol metabolism; glycerol degradation via glycerol kinase pathway; glycerone phosphate from sn-glycerol 3-phosphate (anaerobic route): step 1/1. Conversion of glycerol 3-phosphate to dihydroxyacetone. Uses fumarate or nitrate as electron acceptor. In Pasteurella multocida (strain Pm70), this protein is Anaerobic glycerol-3-phosphate dehydrogenase subunit B.